A 227-amino-acid chain; its full sequence is Protein PhlB (227 aa).

The signal sequence occupies residues 1-35 (MPEGRRLRRALAIALLALVAVTGLLMMAKEQQMGQ). ANK repeat units lie at residues 75–104 (RQVTLLQWAVLSQQPDSVQALLDLGADPAA), 108–137 (DGNSALHTAAMLQDAQYLRLLLAEGAQMNV), 142–171 (TGATPLAAAVLAGREEQLRLLLAAGADTTL), and 175–204 (LGDTPLHLAAKINRRTWRCCCCRPGPMPGR).

Its function is as follows. Cell-protective protein that neutralizes the intracellular lysis capacity of phospholipase A1 through a direct interaction with the enzyme. This chain is Protein PhlB (phlB), found in Serratia liquefaciens.